The primary structure comprises 484 residues: Aspartyl/glutamyl-tRNA(Asn/Gln) amidotransferase subunit B (484 aa).

Belongs to the GatB/GatE family. GatB subfamily. Heterotrimer of A, B and C subunits.

It carries out the reaction L-glutamyl-tRNA(Gln) + L-glutamine + ATP + H2O = L-glutaminyl-tRNA(Gln) + L-glutamate + ADP + phosphate + H(+). It catalyses the reaction L-aspartyl-tRNA(Asn) + L-glutamine + ATP + H2O = L-asparaginyl-tRNA(Asn) + L-glutamate + ADP + phosphate + 2 H(+). Functionally, allows the formation of correctly charged Asn-tRNA(Asn) or Gln-tRNA(Gln) through the transamidation of misacylated Asp-tRNA(Asn) or Glu-tRNA(Gln) in organisms which lack either or both of asparaginyl-tRNA or glutaminyl-tRNA synthetases. The reaction takes place in the presence of glutamine and ATP through an activated phospho-Asp-tRNA(Asn) or phospho-Glu-tRNA(Gln). This chain is Aspartyl/glutamyl-tRNA(Asn/Gln) amidotransferase subunit B, found in Bordetella bronchiseptica (strain ATCC BAA-588 / NCTC 13252 / RB50) (Alcaligenes bronchisepticus).